Consider the following 310-residue polypeptide: Ribonuclease Z (310 aa).

Residues H64, H66, D68, H69, H146, D215, and H273 each coordinate Zn(2+). The active-site Proton acceptor is the D68.

Belongs to the RNase Z family. In terms of assembly, homodimer. The cofactor is Zn(2+).

The catalysed reaction is Endonucleolytic cleavage of RNA, removing extra 3' nucleotides from tRNA precursor, generating 3' termini of tRNAs. A 3'-hydroxy group is left at the tRNA terminus and a 5'-phosphoryl group is left at the trailer molecule.. Zinc phosphodiesterase, which displays some tRNA 3'-processing endonuclease activity. Probably involved in tRNA maturation, by removing a 3'-trailer from precursor tRNA. In Aeropyrum pernix (strain ATCC 700893 / DSM 11879 / JCM 9820 / NBRC 100138 / K1), this protein is Ribonuclease Z.